The sequence spans 229 residues: NADH dehydrogenase [ubiquinone] iron-sulfur protein 8, mitochondrial (229 aa).

The transit peptide at 1-41 (MAAILARKSLSALRSRQLVLAGHTIEGTNGYNRTLLGTRSF) directs the protein to the mitochondrion. 2 consecutive 4Fe-4S ferredoxin-type domains span residues 121–150 (RRYA…IEAE) and 160–189 (TRYD…EGPN). Residues Cys130, Cys133, Cys136, Cys140, Cys169, Cys172, Cys175, and Cys179 each contribute to the [4Fe-4S] cluster site.

This sequence belongs to the complex I 23 kDa subunit family. As to quaternary structure, complex I is composed of about 45 different subunits. This is a component of the iron-sulfur (IP) fragment of the enzyme. The cofactor is [4Fe-4S] cluster. In terms of tissue distribution, lowest expression found in storage tissues of tubers. Higher expression in older leaves than younger ones. Highest expression found in flowers.

It localises to the mitochondrion inner membrane. The catalysed reaction is a ubiquinone + NADH + 5 H(+)(in) = a ubiquinol + NAD(+) + 4 H(+)(out). In terms of biological role, core subunit of the mitochondrial membrane respiratory chain NADH dehydrogenase (Complex I) that is believed to belong to the minimal assembly required for catalysis. Complex I functions in the transfer of electrons from NADH to the respiratory chain. The immediate electron acceptor for the enzyme is believed to be ubiquinone. May donate electrons to ubiquinone. This is NADH dehydrogenase [ubiquinone] iron-sulfur protein 8, mitochondrial from Solanum tuberosum (Potato).